Consider the following 336-residue polypeptide: Dihydroorotate dehydrogenase (quinone) (336 aa).

FMN contacts are provided by residues 62 to 66 (AGLDK) and Thr-86. Lys-66 is a substrate binding site. Residue 111–115 (NRMGF) coordinates substrate. FMN contacts are provided by Asn-139 and Asn-172. Asn-172 contributes to the substrate binding site. Ser-175 acts as the Nucleophile in catalysis. Residue Asn-177 coordinates substrate. FMN-binding residues include Lys-217 and Thr-245. Residue 246-247 (NT) participates in substrate binding. Residues Gly-268, Gly-297, and 318–319 (YS) each bind FMN.

Belongs to the dihydroorotate dehydrogenase family. Type 2 subfamily. As to quaternary structure, monomer. FMN is required as a cofactor.

The protein localises to the cell membrane. The enzyme catalyses (S)-dihydroorotate + a quinone = orotate + a quinol. The protein operates within pyrimidine metabolism; UMP biosynthesis via de novo pathway; orotate from (S)-dihydroorotate (quinone route): step 1/1. In terms of biological role, catalyzes the conversion of dihydroorotate to orotate with quinone as electron acceptor. The sequence is that of Dihydroorotate dehydrogenase (quinone) from Shigella dysenteriae serotype 1 (strain Sd197).